The following is a 489-amino-acid chain: UDP-N-acetylmuramate--L-alanine ligase (489 aa).

130-136 (GTHGKTS) provides a ligand contact to ATP.

Belongs to the MurCDEF family.

It localises to the cytoplasm. The enzyme catalyses UDP-N-acetyl-alpha-D-muramate + L-alanine + ATP = UDP-N-acetyl-alpha-D-muramoyl-L-alanine + ADP + phosphate + H(+). Its pathway is cell wall biogenesis; peptidoglycan biosynthesis. Functionally, cell wall formation. This Corynebacterium efficiens (strain DSM 44549 / YS-314 / AJ 12310 / JCM 11189 / NBRC 100395) protein is UDP-N-acetylmuramate--L-alanine ligase.